We begin with the raw amino-acid sequence, 122 residues long: Cytochrome c3 hydrogenase large chain (122 aa).

The cofactor is Fe cation.

It catalyses the reaction 2 Fe(III)-[cytochrome c3] + H2 = 2 Fe(II)-[cytochrome c3] + 2 H(+). This Acidithiobacillus ferrooxidans (Thiobacillus ferrooxidans) protein is Cytochrome c3 hydrogenase large chain (hoxG).